The sequence spans 334 residues: CRISPR-associated endonuclease Cas1 (334 aa).

Positions 161, 226, and 241 each coordinate Mn(2+).

The protein belongs to the CRISPR-associated endonuclease Cas1 family. As to quaternary structure, homodimer, forms a heterotetramer with a Cas2 homodimer. Mg(2+) serves as cofactor. Requires Mn(2+) as cofactor.

Its function is as follows. CRISPR (clustered regularly interspaced short palindromic repeat), is an adaptive immune system that provides protection against mobile genetic elements (viruses, transposable elements and conjugative plasmids). CRISPR clusters contain spacers, sequences complementary to antecedent mobile elements, and target invading nucleic acids. CRISPR clusters are transcribed and processed into CRISPR RNA (crRNA). Acts as a dsDNA endonuclease. Involved in the integration of spacer DNA into the CRISPR cassette. The protein is CRISPR-associated endonuclease Cas1 of Methanothermobacter thermautotrophicus (strain ATCC 29096 / DSM 1053 / JCM 10044 / NBRC 100330 / Delta H) (Methanobacterium thermoautotrophicum).